The sequence spans 158 residues: NAD(P)H-quinone oxidoreductase subunit J, chloroplastic (158 aa).

Belongs to the complex I 30 kDa subunit family. In terms of assembly, NDH is composed of at least 16 different subunits, 5 of which are encoded in the nucleus.

It localises to the plastid. The protein localises to the chloroplast thylakoid membrane. The catalysed reaction is a plastoquinone + NADH + (n+1) H(+)(in) = a plastoquinol + NAD(+) + n H(+)(out). It carries out the reaction a plastoquinone + NADPH + (n+1) H(+)(in) = a plastoquinol + NADP(+) + n H(+)(out). NDH shuttles electrons from NAD(P)H:plastoquinone, via FMN and iron-sulfur (Fe-S) centers, to quinones in the photosynthetic chain and possibly in a chloroplast respiratory chain. The immediate electron acceptor for the enzyme in this species is believed to be plastoquinone. Couples the redox reaction to proton translocation, and thus conserves the redox energy in a proton gradient. The sequence is that of NAD(P)H-quinone oxidoreductase subunit J, chloroplastic from Solanum tuberosum (Potato).